Reading from the N-terminus, the 359-residue chain is Probable L-ascorbate peroxidase 7, chloroplastic (359 aa).

The N-terminal 71 residues, 1–71 (MAAQRLAALH…KAAGSGRSVM (71 aa)), are a transit peptide targeting the chloroplast. The Proton acceptor role is filled by H118. H247 is a heme b binding site. A K(+)-binding site is contributed by T248. A disordered region spans residues 251–277 (RSRPERSGWGKPETKYTKNGPGAPGGQ). A compositionally biased stretch (basic and acidic residues) spans 252–266 (SRPERSGWGKPETKY). 2 residues coordinate K(+): T280 and D287.

The protein belongs to the peroxidase family. Ascorbate peroxidase subfamily. Requires heme b as cofactor. As to expression, expressed in roots, leaves, stems and flowers.

The protein resides in the plastid. Its subcellular location is the chloroplast stroma. The catalysed reaction is L-ascorbate + H2O2 = L-dehydroascorbate + 2 H2O. Its function is as follows. Plays a key role in hydrogen peroxide removal. This chain is Probable L-ascorbate peroxidase 7, chloroplastic, found in Oryza sativa subsp. japonica (Rice).